Reading from the N-terminus, the 312-residue chain is NADPH-dependent alpha-keto amide reductase (312 aa).

Positions 25, 26, 27, and 59 each coordinate NADPH. Catalysis depends on proton donor residues tyrosine 64 and histidine 122. At serine 123 the chain carries Phosphoserine. The NADPH site is built by serine 157, glutamine 179, serine 208, leucine 210, threonine 257, threonine 258, serine 259, serine 260, lysine 261, and arginine 264.

Belongs to the aldo/keto reductase family. In terms of assembly, monomer. The N-terminus is blocked.

It is found in the cytoplasm. Its subcellular location is the nucleus. Functionally, reduces aromatic alpha-keto amides, aliphatic and aromatic alpha-keto esters, but not beta-keto esters. The polypeptide is NADPH-dependent alpha-keto amide reductase (Saccharomyces cerevisiae (strain ATCC 204508 / S288c) (Baker's yeast)).